We begin with the raw amino-acid sequence, 373 residues long: Probable tRNA sulfurtransferase (373 aa).

Residues 54–158 enclose the THUMP domain; that stretch reads NKNIEELSKV…NDVAYFYYKI (105 aa). ATP-binding positions include 176 to 177, 201 to 202, K256, G278, and Q287; these read LF and NF.

The protein belongs to the ThiI family.

Its subcellular location is the cytoplasm. The enzyme catalyses [ThiI sulfur-carrier protein]-S-sulfanyl-L-cysteine + a uridine in tRNA + 2 reduced [2Fe-2S]-[ferredoxin] + ATP + H(+) = [ThiI sulfur-carrier protein]-L-cysteine + a 4-thiouridine in tRNA + 2 oxidized [2Fe-2S]-[ferredoxin] + AMP + diphosphate. The catalysed reaction is [ThiS sulfur-carrier protein]-C-terminal Gly-Gly-AMP + S-sulfanyl-L-cysteinyl-[cysteine desulfurase] + AH2 = [ThiS sulfur-carrier protein]-C-terminal-Gly-aminoethanethioate + L-cysteinyl-[cysteine desulfurase] + A + AMP + 2 H(+). The protein operates within cofactor biosynthesis; thiamine diphosphate biosynthesis. In terms of biological role, catalyzes the ATP-dependent transfer of a sulfur to tRNA to produce 4-thiouridine in position 8 of tRNAs, which functions as a near-UV photosensor. Also catalyzes the transfer of sulfur to the sulfur carrier protein ThiS, forming ThiS-thiocarboxylate. This is a step in the synthesis of thiazole, in the thiamine biosynthesis pathway. The sulfur is donated as persulfide by IscS. The polypeptide is Probable tRNA sulfurtransferase (Saccharolobus islandicus (strain L.S.2.15 / Lassen #1) (Sulfolobus islandicus)).